The primary structure comprises 424 residues: MAKNIQAIRGMNDYLPGETAIWQRIEGTLKNVLGSYGYSEIRLPIVEQTPLFKRAIGEVTDVVEKEMYTFEDRNGDSLTLRPEGTAGCVRAGIEHGLLYNQEQRLWYIGPMFRHERPQKGRYRQFHQLGCEVFGLQGPDIDAELIMLTARWWRALGIFEHVTLELNSIGSLEARANYRDALVAFLEQHKEKLDEDCKRRMYTNPLRVLDSKNPEVQALLNDAPALGDYLDEESREHFAGLCKLLESAGIAYTVNQRLVRGLDYYNRTVFEWVTNSLGSQGTVCAGGRYDGLVEQLGGRATPAVGFAMGLERLVLLVQAVNPEFKADPVVDIYLVASGADTQSAAMALAERLRDELLGVKLMTNHGGGNFKKQFARADKWGARVAVVLGESEVANGTAVVKDLRSGEQTAVAQDSVAAHLRTLLG.

Belongs to the class-II aminoacyl-tRNA synthetase family. In terms of assembly, homodimer.

It localises to the cytoplasm. It catalyses the reaction tRNA(His) + L-histidine + ATP = L-histidyl-tRNA(His) + AMP + diphosphate + H(+). The chain is Histidine--tRNA ligase from Shigella flexneri.